Here is a 725-residue protein sequence, read N- to C-terminus: Eukaryotic translation initiation factor 3 subunit B (725 aa).

Residues 46–130 form the RRM domain; the sequence is NCVFIAGIPV…HTFTARSFKD (85 aa). WD repeat units follow at residues 202 to 240, 242 to 280, 354 to 395, 462 to 504, 510 to 552, and 554 to 594; these read RANW…RAHR, AHTN…SLRI, VNIE…SMQR, PLSE…HAPK, DAGV…AKRT, and VIEH…FTFQ.

This sequence belongs to the eIF-3 subunit B family. In terms of assembly, component of the eukaryotic translation initiation factor 3 (eIF-3) complex.

It is found in the cytoplasm. Its function is as follows. RNA-binding component of the eukaryotic translation initiation factor 3 (eIF-3) complex, which is involved in protein synthesis of a specialized repertoire of mRNAs and, together with other initiation factors, stimulates binding of mRNA and methionyl-tRNAi to the 40S ribosome. The eIF-3 complex specifically targets and initiates translation of a subset of mRNAs involved in cell proliferation. The protein is Eukaryotic translation initiation factor 3 subunit B of Caenorhabditis elegans.